A 221-amino-acid chain; its full sequence is 7-cyano-7-deazaguanine synthase (221 aa).

ATP is bound at residue 10 to 20 (FSGGQDSTTCL). Residues Cys186, Cys195, Cys198, and Cys201 each contribute to the Zn(2+) site.

This sequence belongs to the QueC family. In terms of assembly, homodimer. It depends on Zn(2+) as a cofactor.

It catalyses the reaction 7-carboxy-7-deazaguanine + NH4(+) + ATP = 7-cyano-7-deazaguanine + ADP + phosphate + H2O + H(+). It functions in the pathway purine metabolism; 7-cyano-7-deazaguanine biosynthesis. In terms of biological role, catalyzes the ATP-dependent conversion of 7-carboxy-7-deazaguanine (CDG) to 7-cyano-7-deazaguanine (preQ(0)). In Geobacillus sp. (strain WCH70), this protein is 7-cyano-7-deazaguanine synthase.